A 115-amino-acid chain; its full sequence is Ribonuclease P protein component (115 aa).

It belongs to the RnpA family. In terms of assembly, consists of a catalytic RNA component (M1 or rnpB) and a protein subunit.

It carries out the reaction Endonucleolytic cleavage of RNA, removing 5'-extranucleotides from tRNA precursor.. Functionally, RNaseP catalyzes the removal of the 5'-leader sequence from pre-tRNA to produce the mature 5'-terminus. It can also cleave other RNA substrates such as 4.5S RNA. The protein component plays an auxiliary but essential role in vivo by binding to the 5'-leader sequence and broadening the substrate specificity of the ribozyme. This is Ribonuclease P protein component from Buchnera aphidicola subsp. Acyrthosiphon pisum (strain APS) (Acyrthosiphon pisum symbiotic bacterium).